Reading from the N-terminus, the 243-residue chain is Small ribosomal subunit protein uS3 (243 aa).

The KH type-2 domain maps to 39-107; it reads LRKLISKELQ…KIKLNIKEIH (69 aa). Residues 212 to 243 are disordered; that stretch reads VAKSPAEPATTAPTPAPERRERQPRRNSNASA.

This sequence belongs to the universal ribosomal protein uS3 family. As to quaternary structure, part of the 30S ribosomal subunit. Forms a tight complex with proteins S10 and S14.

Functionally, binds the lower part of the 30S subunit head. Binds mRNA in the 70S ribosome, positioning it for translation. The protein is Small ribosomal subunit protein uS3 of Chloroflexus aurantiacus (strain ATCC 29364 / DSM 637 / Y-400-fl).